We begin with the raw amino-acid sequence, 440 residues long: Beta-1,3-galactosyl-O-glycosyl-glycoprotein beta-1,6-N-acetylglucosaminyltransferase (440 aa).

Residues 1–12 (MKMAGWKKKLCR) are Cytoplasmic-facing. A helical; Signal-anchor for type II membrane protein transmembrane segment spans residues 13–30 (GHHLWALGCYMLLAVVSL). Residues 31–440 (RLSLRFKCDV…RHKAIYGTEL (410 aa)) lie on the Lumenal side of the membrane. N-linked (GlcNAc...) asparagine; by host glycosylation is found at N72 and N108. 4 disulfides stabilise this stretch: C73/C230, C164/C384, C185/C212, and C393/C425.

This sequence belongs to the glycosyltransferase 14 family.

The protein localises to the host Golgi apparatus membrane. It carries out the reaction a 3-O-[beta-D-galactosyl-(1-&gt;3)-N-acetyl-alpha-D-galactosaminyl]-L-seryl-[protein] + UDP-N-acetyl-alpha-D-glucosamine = 3-O-{beta-D-galactosyl-(1-&gt;3)-[N-acetyl-beta-D-glucosaminyl-(1-&gt;6)]-N-acetyl-alpha-D-galactosaminyl}-L-seryl-[protein] + UDP + H(+). The catalysed reaction is a 3-O-[beta-D-galactosyl-(1-&gt;3)-N-acetyl-alpha-D-galactosaminyl]-L-threonyl-[protein] + UDP-N-acetyl-alpha-D-glucosamine = a 3-O-{beta-D-galactosyl-(1-&gt;3)-[N-acetyl-beta-D-glucosaminyl-(1-&gt;6)]-N-acetyl-alpha-D-galactosaminyl}-L-threonyl-[protein] + UDP + H(+). The enzyme catalyses a beta-D-Gal-(1-&gt;4)-beta-D-GlcNAc-(1-&gt;3)-beta-D-Gal-(1-&gt;4)-beta-D-GlcNAc derivative + UDP-N-acetyl-alpha-D-glucosamine = a beta-D-Gal-(1-&gt;4)-beta-D-GlcNAc-(1-&gt;3)-[beta-D-GlcNAc-(1-&gt;6)]-beta-D-Gal-(1-&gt;4)-N-acetyl-beta-D-glucosaminyl derivative + UDP + H(+). It catalyses the reaction 3-O-[N-acetyl-beta-D-glucosaminyl-(1-&gt;3)-N-acetyl-alpha-D-galactosaminyl]-L-seryl-[protein] + UDP-N-acetyl-alpha-D-glucosamine = 3-O-[N-acetyl-beta-D-glucosaminyl-(1-&gt;3)-[N-acetyl-beta-D-glucosaminyl-(1-&gt;6)]-N-acetyl-alpha-D-galactosaminyl]-L-seryl-[protein] + UDP + H(+). It carries out the reaction a 3-O-[N-acetyl-beta-D-glucosaminyl-(1-&gt;3)-N-acetyl-alpha-D-galactosaminyl]-L-threonyl-[protein] + UDP-N-acetyl-alpha-D-glucosamine = 3-O-[N-acetyl-beta-D-glucosaminyl-(1-&gt;3)-[N-acetyl-beta-D-glucosaminyl-(1-&gt;6)]-N-acetyl-alpha-D-galactosaminyl]-L-threonyl-[protein] + UDP + H(+). It functions in the pathway protein modification; protein glycosylation. Non-essential glycosyltransferase that can synthesize all known mucin beta 6 N-acetylglucosaminides. Mediates core 2 and core 4 O-glycan branching, 2 important steps in mucin-type biosynthesis. Has also I-branching enzyme activity by converting linear into branched poly-N-acetyllactosaminoglycans. Contributes to the post-translational modifications of structural proteins. The protein is Beta-1,3-galactosyl-O-glycosyl-glycoprotein beta-1,6-N-acetylglucosaminyltransferase (Bo17) of Bos taurus (Bovine).